The primary structure comprises 134 residues: Small ribosomal subunit protein uS8c (134 aa).

The protein belongs to the universal ribosomal protein uS8 family. Part of the 30S ribosomal subunit.

Its subcellular location is the plastid. It localises to the chloroplast. Functionally, one of the primary rRNA binding proteins, it binds directly to 16S rRNA central domain where it helps coordinate assembly of the platform of the 30S subunit. This chain is Small ribosomal subunit protein uS8c (rps8), found in Cucumis sativus (Cucumber).